Here is a 131-residue protein sequence, read N- to C-terminus: MINDLISDSLTRIRNAGMRRLETTQLLHSKVIEALLGIFQAKGYIESFNVIEENKKKFINVVLKYDEKGKSVINEVKRVSKPGRRVYKGKDEIKRFKNGYGTIVVSTSKGVLANDEAYKAGVGGEVLCTIW.

The protein belongs to the universal ribosomal protein uS8 family. Part of the 30S ribosomal subunit. Contacts proteins S5 and S12.

In terms of biological role, one of the primary rRNA binding proteins, it binds directly to 16S rRNA central domain where it helps coordinate assembly of the platform of the 30S subunit. The protein is Small ribosomal subunit protein uS8 of Campylobacter lari (strain RM2100 / D67 / ATCC BAA-1060).